The primary structure comprises 489 residues: MANYFNTLPLRLQLEQLGVCEFMEQSEFADGISALAGKKVVIVGCGAQGLNQGLNMRDSGLDISYALRADAIAEKRASYKNATENGFKVGTYEELIPTADLVCNLTPDKQHTSVVNAIMPLMKQGSTLAYSHGFNIVEEGMQIRKDITVIMCAPKCPGSEVREEYKRGFGVPTLIAVHPENDPNGFGLDQAKAYAVATGGHKAGVLRSSFVAEVKSDLMGEQTILCGLLQTGSILCFDKMVEKGIDAAYASKLIQYGWETITEALKHGGITNMMDRLNNPSKIEAYELAEELKDIMRPLFQKHQDDIISGEFSRTMMIDWANDDVNLLKWRAATGETNFEKTAPQEAPISEQEYFDNGVLMIAMVKAGVELAFETMTEAGIIEESAYYESLHELPLIANTIARKKLFEMNRVISDTAEYGCYLFDHACKPLLTEFMKKVETNIIGKPFSTSNGVDNTVLIAVNKEIRQHPIEEVGAWLRESMTAMKKIG.

A KARI N-terminal Rossmann domain is found at 17–208 (LGVCEFMEQS…GGHKAGVLRS (192 aa)). NADP(+) contacts are provided by residues 45–48 (CGAQ), Arg68, Arg76, Ser78, and 108–110 (DKQ). His132 is an active-site residue. Gly158 is a binding site for NADP(+). KARI C-terminal knotted domains lie at 209–344 (SFVA…KTAP) and 345–485 (QEAP…MTAM). The Mg(2+) site is built by Asp217, Glu221, Glu389, and Glu393. Residue Ser414 coordinates substrate.

Belongs to the ketol-acid reductoisomerase family. Mg(2+) is required as a cofactor.

It catalyses the reaction (2R)-2,3-dihydroxy-3-methylbutanoate + NADP(+) = (2S)-2-acetolactate + NADPH + H(+). It carries out the reaction (2R,3R)-2,3-dihydroxy-3-methylpentanoate + NADP(+) = (S)-2-ethyl-2-hydroxy-3-oxobutanoate + NADPH + H(+). It functions in the pathway amino-acid biosynthesis; L-isoleucine biosynthesis; L-isoleucine from 2-oxobutanoate: step 2/4. It participates in amino-acid biosynthesis; L-valine biosynthesis; L-valine from pyruvate: step 2/4. In terms of biological role, involved in the biosynthesis of branched-chain amino acids (BCAA). Catalyzes an alkyl-migration followed by a ketol-acid reduction of (S)-2-acetolactate (S2AL) to yield (R)-2,3-dihydroxy-isovalerate. In the isomerase reaction, S2AL is rearranged via a Mg-dependent methyl migration to produce 3-hydroxy-3-methyl-2-ketobutyrate (HMKB). In the reductase reaction, this 2-ketoacid undergoes a metal-dependent reduction by NADPH to yield (R)-2,3-dihydroxy-isovalerate. This chain is Ketol-acid reductoisomerase (NADP(+)), found in Flavobacterium johnsoniae (strain ATCC 17061 / DSM 2064 / JCM 8514 / BCRC 14874 / CCUG 350202 / NBRC 14942 / NCIMB 11054 / UW101) (Cytophaga johnsonae).